Reading from the N-terminus, the 265-residue chain is HUWE1-associated protein modifying stress responses (265 aa).

Disordered regions lie at residues 1 to 22 (MEEK…HWFS), 140 to 173 (GKAP…SVET), and 194 to 219 (ISMR…RRNG). Low complexity predominate over residues 147-172 (SSRAPPRLAMVSPSRSTPSETSSSVE).

The protein belongs to the HAPSTR1 family. As to quaternary structure, oligomer.

The protein localises to the nucleus. Its subcellular location is the cytoplasm. Acts as a central player within a network of stress response pathways promoting cellular adaptability. Functions as a negative regulator of TP53/P53 in the cellular response to telomere erosion and probably also DNA damage. The polypeptide is HUWE1-associated protein modifying stress responses (Danio rerio (Zebrafish)).